The primary structure comprises 73 residues: Small ribosomal subunit protein bS21 (73 aa).

The protein belongs to the bacterial ribosomal protein bS21 family.

The sequence is that of Small ribosomal subunit protein bS21 from Parvibaculum lavamentivorans (strain DS-1 / DSM 13023 / NCIMB 13966).